The chain runs to 130 residues: Small ribosomal subunit protein uS11c (130 aa).

Belongs to the universal ribosomal protein uS11 family. As to quaternary structure, part of the 30S ribosomal subunit.

The protein resides in the plastid. It localises to the chloroplast. The sequence is that of Small ribosomal subunit protein uS11c from Guillardia theta (Cryptophyte).